We begin with the raw amino-acid sequence, 306 residues long: Triplex capsid protein 2 (306 aa).

It belongs to the herpesviridae TRX2 protein family. As to quaternary structure, interacts with TRX1 and major capisd protein/MCP.

The protein resides in the virion. The protein localises to the host nucleus. In terms of biological role, structural component of the T=16 icosahedral capsid. The capsid is composed of pentamers and hexamers of major capsid protein/MCP, which are linked together by heterotrimers called triplexes. These triplexes are formed by a single molecule of triplex protein 1/TRX1 and two copies of triplex protein 2/TRX2. Additionally, TRX1 is required for efficient transport of TRX2 to the nucleus, which is the site of capsid assembly. This is Triplex capsid protein 2 from Human cytomegalovirus (strain AD169) (HHV-5).